A 649-amino-acid chain; its full sequence is MADDSGTENEGSGCTGWFMVEAIVEHTTGTQISEDEEEEVEDSGYDMVDFIDDRHITQNSVEAQALFNRQEADAHYATVQDLKRKYLGSPYVSPISNVANAVESEISPRLDAIKLTTQPKKVKRRLFETRELTDSGYGYSEVEAATQVEKHGDPENGGDGQERDTGRDIEGEGVEHREAEAVDDSTREHADTSGILELLKCKDIRSTLHGKFKDCFGLSFVDLIRPFKSDRTTCADWVVAGFGIHHSIADAFQKLIEPLSLYAHIQWLTNAWGMVLLVLIRFKVNKSRCTVARTLGTLLNIPENHMLIEPPKIQSGVRALYWFRTGISNASTVIGEAPEWITRQTVIEHSLADSQFKLTEMVQWAYDNDICEESEIAFEYAQRGDFDSNARAFLNSNMQAKYVKDCAIMCRHYKHAEMKKMSIKQWIKYRGTKVDSVGNWKPIVQFLRHQNIEFIPFLSKLKLWLHGTPKKNCIAIVGPPDTGKSCFCMSLIKFLGGTVISYVNSCSHFWLQPLTDAKVALLDDATQPCWTYMDTYMRNLLDGNPMSIDRKHRALTLIKCPPLLVTSNIDISKEEKYKYLHSRVTTFTFPNPFPFDRNGNAVYELSDANWKCFFERLSSSLDIEDSEDEEDGSNSQAFRCVPGSVVRTL.

The Nuclear localization signal motif lies at 83–85 (KRK). Phosphoserine; by host is present on residues Ser89, Ser93, and Ser107. The Nuclear export signal motif lies at 106-115 (ISPRLDAIKL). Positions 146 to 188 (TQVEKHGDPENGGDGQERDTGRDIEGEGVEHREAEAVDDSTRE) are disordered. Positions 148–188 (VEKHGDPENGGDGQERDTGRDIEGEGVEHREAEAVDDSTRE) are enriched in basic and acidic residues. The segment at 187-353 (REHADTSGIL…QTVIEHSLAD (167 aa)) is DNA-binding region. The 151-residue stretch at 452–602 (IEFIPFLSKL…FPFDRNGNAV (151 aa)) folds into the SF3 helicase domain. Position 478–485 (478–485 (GPPDTGKS)) interacts with ATP. Lys559 participates in a covalent cross-link: Glycyl lysine isopeptide (Lys-Gly) (interchain with G-Cter in SUMO).

Belongs to the papillomaviridae E1 protein family. In terms of assembly, can form hexamers. Interacts with E2 protein; this interaction increases E1 DNA binding specificity. Interacts with host DNA polymerase subunit POLA2. Interacts with host single stranded DNA-binding protein RPA1. Interacts with host TOP1; this interaction stimulates the enzymatic activity of TOP1. Phosphorylated. Post-translationally, sumoylated.

The protein localises to the host nucleus. It carries out the reaction Couples ATP hydrolysis with the unwinding of duplex DNA by translocating in the 3'-5' direction.. The enzyme catalyses ATP + H2O = ADP + phosphate + H(+). Its function is as follows. ATP-dependent DNA 3'-5' helicase required for initiation of viral DNA replication. It forms a complex with the viral E2 protein. The E1-E2 complex binds to the replication origin which contains binding sites for both proteins. During the initial step, a dimer of E1 interacts with a dimer of protein E2 leading to a complex that binds the viral origin of replication with high specificity. Then, a second dimer of E1 displaces the E2 dimer in an ATP-dependent manner to form the E1 tetramer. Following this, two E1 monomers are added to each half of the site, which results in the formation of two E1 trimers on the viral ori. Subsequently, two hexamers will be created. The double hexamer acts as a bi-directional helicase machinery and unwinds the viral DNA and then recruits the host DNA polymerase to start replication. The polypeptide is Replication protein E1 (Human papillomavirus 11).